A 1215-amino-acid chain; its full sequence is Protein benign gonial cell neoplasm (1215 aa).

Residues 407 to 439 (TGKTAVHFASELNKANHLRLLLFMGADPYIVDL) form an ANK repeat. Residue Thr-898 is modified to Phosphothreonine.

As to quaternary structure, part of a complex composed of at least mei-P26, bam, bgcn and Sxl; this complex is involved in translational repression of nanos mRNA. Interacts with bam (via C-terminus); the interaction is direct. Interacts with mei-P26; the interaction is direct and does not require bam. Weakly interacts with wh/wuho; this interaction may be required for the function or formation of the mei-P26-bgcn-bam-Sxl complex. Part of a complex composed of at least tut, bam and bgcn; complex formation does not require RNA. Interacts with tut; the interaction is indirect and is mediated by bam. As part of the bam-bgcn-tut complex associates with twin; may recruit the CCR4-NOT1 deadenylation complex to mRNA 3'UTRs to mediate post-transcriptional regulation of expression. In terms of tissue distribution, expressed in testis and in 5-8 germline stem cells of ovaries, immediately adjacent to terminal filament. Expressed in ovarian germline cells throughout the germarium (at protein level).

In terms of biological role, forms a complex with tut and bam involved in 3'UTR-dependent post-transcriptional repression of several 3'-RNA processing factors, which promotes germline stem cell lineage differentiation and mitosis-to-meiosis transition. Part of a complex with bam involved in 3'-UTR-dependent translational repression of a subset of mRNAs, including those for mei-P26, nanos and shg/E-cadherin; may act as a promiscuous RNA-binding protein tethering bam to its target mRNAs. Required for regulating the progression of gonialblast cells through transit amplification and differentiation into gametes. The protein is Protein benign gonial cell neoplasm of Drosophila melanogaster (Fruit fly).